Consider the following 492-residue polypeptide: Membrane-bound lytic murein transglycosylase F (492 aa).

An N-terminal signal peptide occupies residues 1-18 (MKGLFLRIIAIVALLLWA). The tract at residues 19 to 268 (IDMVFPWQQI…RIEEKYFNHL (250 aa)) is non-LT domain. Residues 270–492 (QFDYVDTRSY…DTLATTVTTQ (223 aa)) are LT domain. Glutamate 313 is an active-site residue.

In the N-terminal section; belongs to the bacterial solute-binding protein 3 family. The protein in the C-terminal section; belongs to the transglycosylase Slt family.

It localises to the cell outer membrane. The catalysed reaction is Exolytic cleavage of the (1-&gt;4)-beta-glycosidic linkage between N-acetylmuramic acid (MurNAc) and N-acetylglucosamine (GlcNAc) residues in peptidoglycan, from either the reducing or the non-reducing ends of the peptidoglycan chains, with concomitant formation of a 1,6-anhydrobond in the MurNAc residue.. Functionally, murein-degrading enzyme that degrades murein glycan strands and insoluble, high-molecular weight murein sacculi, with the concomitant formation of a 1,6-anhydromuramoyl product. Lytic transglycosylases (LTs) play an integral role in the metabolism of the peptidoglycan (PG) sacculus. Their lytic action creates space within the PG sacculus to allow for its expansion as well as for the insertion of various structures such as secretion systems and flagella. This Pasteurella multocida (strain Pm70) protein is Membrane-bound lytic murein transglycosylase F.